The sequence spans 374 residues: Peptide chain release factor 2 (374 aa).

Position 250 is an N5-methylglutamine (Q250).

This sequence belongs to the prokaryotic/mitochondrial release factor family. Post-translationally, methylated by PrmC. Methylation increases the termination efficiency of RF2.

Its subcellular location is the cytoplasm. Peptide chain release factor 2 directs the termination of translation in response to the peptide chain termination codons UGA and UAA. In Beutenbergia cavernae (strain ATCC BAA-8 / DSM 12333 / CCUG 43141 / JCM 11478 / NBRC 16432 / NCIMB 13614 / HKI 0122), this protein is Peptide chain release factor 2.